A 110-amino-acid polypeptide reads, in one-letter code: Small ribosomal subunit protein bS16 (110 aa).

Residues 87 to 110 are disordered; sequence ARQNPIKAVPRKERKAQAEAAAKG.

This sequence belongs to the bacterial ribosomal protein bS16 family.

This Bradyrhizobium sp. (strain BTAi1 / ATCC BAA-1182) protein is Small ribosomal subunit protein bS16.